We begin with the raw amino-acid sequence, 118 residues long: MARVKRGVVARARHKKVLKQAKGYYGARSRVYRVAVQAVTKAGQYAYRDRRQKKRQFRQLWIARINAAARQNGMSYSRFINGLKKASVEIDRKILADIAVHDKNAFSALVDAAKGALA.

This sequence belongs to the bacterial ribosomal protein bL20 family.

Binds directly to 23S ribosomal RNA and is necessary for the in vitro assembly process of the 50S ribosomal subunit. It is not involved in the protein synthesizing functions of that subunit. The polypeptide is Large ribosomal subunit protein bL20 (Pseudoalteromonas atlantica (strain T6c / ATCC BAA-1087)).